We begin with the raw amino-acid sequence, 49 residues long: uncharacterized protein (49 aa).

This is an uncharacterized protein from Homo sapiens (Human).